Here is a 643-residue protein sequence, read N- to C-terminus: Protein disulfide-isomerase A4 (643 aa).

The N-terminal stretch at 1-20 (MRPRKAWMLVLLLALVQLLA) is a signal peptide. Thioredoxin domains lie at 21 to 168 (VASA…EVSQ) and 170 to 300 (NWTP…EFLK). A disordered region spans residues 24–54 (AGAPDEDSTDKEDAIEEDEEEDEDDDDDDDD). Positions 27–54 (PDEDSTDKEDAIEEDEEEDEDDDDDDDD) are enriched in acidic residues. A CXXC motif is present at residues 90 to 93 (CGHC). 2 disulfides stabilise this stretch: Cys-90–Cys-93 and Cys-205–Cys-208. Position 365 is an N6-acetyllysine (Lys-365). One can recognise a Thioredoxin 3 domain in the interval 503–634 (FKKGKLKPVI…LSKFIEEHAT (132 aa)). The CXXC motif lies at 553 to 556 (CGHC). An intrachain disulfide couples Cys-553 to Cys-556. Residues 640–643 (KEEL) carry the Prevents secretion from ER motif.

It belongs to the protein disulfide isomerase family. As to quaternary structure, part of a large chaperone multiprotein complex comprising DNAJB11, HSP90B1, HSPA5, HYOU, PDIA2, PDIA4, PDIA6, PPIB, SDF2L1, UGGT1 and very small amounts of ERP29, but not, or at very low levels, CALR nor CANX. Component of a complex containing at least CRELD2, MANF, MATN3 and PDIA4.

Its subcellular location is the endoplasmic reticulum lumen. The protein localises to the melanosome. It catalyses the reaction Catalyzes the rearrangement of -S-S- bonds in proteins.. This chain is Protein disulfide-isomerase A4 (PDIA4), found in Bos taurus (Bovine).